The primary structure comprises 273 residues: Dermonecrotic toxin LapSicTox-alphaII1 (273 aa).

Histidine 5 is a catalytic residue. Residues glutamate 25 and aspartate 27 each contribute to the Mg(2+) site. The Nucleophile role is filled by histidine 41. 2 disulfide bridges follow: cysteine 45–cysteine 51 and cysteine 47–cysteine 191. Aspartate 85 is a binding site for Mg(2+).

Belongs to the arthropod phospholipase D family. Class II subfamily. The cofactor is Mg(2+). Expressed by the venom gland.

The protein localises to the secreted. It carries out the reaction an N-(acyl)-sphingosylphosphocholine = an N-(acyl)-sphingosyl-1,3-cyclic phosphate + choline. It catalyses the reaction an N-(acyl)-sphingosylphosphoethanolamine = an N-(acyl)-sphingosyl-1,3-cyclic phosphate + ethanolamine. The catalysed reaction is a 1-acyl-sn-glycero-3-phosphocholine = a 1-acyl-sn-glycero-2,3-cyclic phosphate + choline. The enzyme catalyses a 1-acyl-sn-glycero-3-phosphoethanolamine = a 1-acyl-sn-glycero-2,3-cyclic phosphate + ethanolamine. Functionally, dermonecrotic toxins cleave the phosphodiester linkage between the phosphate and headgroup of certain phospholipids (sphingolipid and lysolipid substrates), forming an alcohol (often choline) and a cyclic phosphate. This toxin acts on sphingomyelin (SM). It may also act on ceramide phosphoethanolamine (CPE), lysophosphatidylcholine (LPC) and lysophosphatidylethanolamine (LPE), but not on lysophosphatidylserine (LPS), and lysophosphatidylglycerol (LPG). It acts by transphosphatidylation, releasing exclusively cyclic phosphate products as second products. Induces dermonecrosis, hemolysis, increased vascular permeability, edema, inflammatory response, and platelet aggregation. In Loxosceles apachea (Apache recluse spider), this protein is Dermonecrotic toxin LapSicTox-alphaII1.